A 323-amino-acid chain; its full sequence is tRNA dimethylallyltransferase (323 aa).

16 to 23 (GPTASGKT) contributes to the ATP binding site. 18–23 (TASGKT) is a substrate binding site. Interaction with substrate tRNA regions lie at residues 41–44 (DSAL), 165–169 (QRIQR), 253–258 (RCVGYR), and 286–293 (KRQITWLR).

The protein belongs to the IPP transferase family. Monomer. Mg(2+) is required as a cofactor.

It catalyses the reaction adenosine(37) in tRNA + dimethylallyl diphosphate = N(6)-dimethylallyladenosine(37) in tRNA + diphosphate. Catalyzes the transfer of a dimethylallyl group onto the adenine at position 37 in tRNAs that read codons beginning with uridine, leading to the formation of N6-(dimethylallyl)adenosine (i(6)A). The chain is tRNA dimethylallyltransferase from Ralstonia nicotianae (strain ATCC BAA-1114 / GMI1000) (Ralstonia solanacearum).